A 178-amino-acid polypeptide reads, in one-letter code: NADH-quinone oxidoreductase subunit B (178 aa).

Positions 45, 46, 111, and 140 each coordinate [4Fe-4S] cluster.

Belongs to the complex I 20 kDa subunit family. As to quaternary structure, NDH-1 is composed of 15 different subunits. Subunits NuoB, C, D, E, F, and G constitute the peripheral sector of the complex. Requires [4Fe-4S] cluster as cofactor.

The protein localises to the cell membrane. The catalysed reaction is a quinone + NADH + 5 H(+)(in) = a quinol + NAD(+) + 4 H(+)(out). NDH-1 shuttles electrons from NADH, via FMN and iron-sulfur (Fe-S) centers, to quinones in the respiratory chain. The immediate electron acceptor for the enzyme in this species is believed to be a menaquinone. Couples the redox reaction to proton translocation (for every two electrons transferred, four hydrogen ions are translocated across the cytoplasmic membrane), and thus conserves the redox energy in a proton gradient. This chain is NADH-quinone oxidoreductase subunit B, found in Deinococcus deserti (strain DSM 17065 / CIP 109153 / LMG 22923 / VCD115).